The sequence spans 197 residues: Phosphoheptose isomerase (197 aa).

The 163-residue stretch at 34 to 196 folds into the SIS domain; sequence MVHCLLSGNK…DHTLFPQDEQ (163 aa). Residue 49-51 coordinates substrate; the sequence is NGG. Zn(2+)-binding residues include His-58 and Glu-62. Residues Glu-62, 91-92, 117-119, Ser-122, and Gln-172 each bind substrate; these read ND and STS. Positions 172 and 180 each coordinate Zn(2+).

Belongs to the SIS family. GmhA subfamily. In terms of assembly, homotetramer. Zn(2+) serves as cofactor.

It localises to the cytoplasm. The catalysed reaction is 2 D-sedoheptulose 7-phosphate = D-glycero-alpha-D-manno-heptose 7-phosphate + D-glycero-beta-D-manno-heptose 7-phosphate. It functions in the pathway carbohydrate biosynthesis; D-glycero-D-manno-heptose 7-phosphate biosynthesis; D-glycero-alpha-D-manno-heptose 7-phosphate and D-glycero-beta-D-manno-heptose 7-phosphate from sedoheptulose 7-phosphate: step 1/1. Its function is as follows. Catalyzes the isomerization of sedoheptulose 7-phosphate in D-glycero-D-manno-heptose 7-phosphate. The polypeptide is Phosphoheptose isomerase (Shewanella halifaxensis (strain HAW-EB4)).